The sequence spans 676 residues: Protein cereblon (676 aa).

Acidic residues predominate over residues 1–11 (MDDEETAEIDE). 3 disordered regions span residues 1–78 (MDDE…TTAH), 118–194 (EDAG…AVPR), and 249–276 (DDAN…LDVD). Composition is skewed to low complexity over residues 12 to 33 (TSSS…TETA) and 125 to 139 (VPQN…TPPA). The segment covering 156–177 (LVNNDSPSQASISSRHSGSDMS) has biased composition (polar residues). One can recognise a Lon N-terminal domain in the interval 314-542 (RMLIFMHQHI…IIGTTLKHES (229 aa)). One can recognise a CULT domain in the interval 541–650 (ESLFYCRYCN…LAGSSVRIGK (110 aa)). Residues C546, C549, C615, and C618 each coordinate Zn(2+).

This sequence belongs to the CRBN family. Likely a component of a DCX (DDB1-CUL4-X-box) protein ligase complex. May interact with pic/DDB1. Post-translationally, ubiquitinated.

It is found in the nucleus. Its pathway is protein modification; protein ubiquitination. Functionally, substrate recognition component of a DCX (DDB1-CUL4-X-box) E3 protein ligase complex that mediates the ubiquitination and subsequent proteasomal degradation of target proteins. Has an essential role in mediating growth by negatively regulating insulin signaling. It also has a role in maintaining presynaptic function in the neuromuscular junction synapses of third-instar larvae. The polypeptide is Protein cereblon (Drosophila mojavensis (Fruit fly)).